Here is a 247-residue protein sequence, read N- to C-terminus: Uridylate kinase (247 aa).

ATP is bound at residue 15-18 (KLSG). An involved in allosteric activation by GTP region spans residues 23 to 28 (GDEGFG). Gly57 provides a ligand contact to UMP. The ATP site is built by Gly58 and Arg62. UMP-binding positions include Asp77 and 138-145 (TGNPFFTT). Thr165, Tyr171, and Asp174 together coordinate ATP.

Belongs to the UMP kinase family. As to quaternary structure, homohexamer.

Its subcellular location is the cytoplasm. The enzyme catalyses UMP + ATP = UDP + ADP. Its pathway is pyrimidine metabolism; CTP biosynthesis via de novo pathway; UDP from UMP (UMPK route): step 1/1. Allosterically activated by GTP. Inhibited by UTP. Functionally, catalyzes the reversible phosphorylation of UMP to UDP. The polypeptide is Uridylate kinase (Colwellia psychrerythraea (strain 34H / ATCC BAA-681) (Vibrio psychroerythus)).